Reading from the N-terminus, the 592-residue chain is BRCA1-associated protein (592 aa).

Ser52 is modified (phosphoserine). The interval 78-124 (KSNPDELKTTVEERKSSEASPTAQRSKDHSKECINAAPDSPSKQLPD) is disordered. Over residues 80-94 (NPDELKTTVEERKSS) the composition is skewed to basic and acidic residues. Residues Ser97, Ser117, and Ser119 each carry the phosphoserine modification. The segment at 264–304 (CTVCLERMDESVNGILTTLCNHSFHSQCLQRWDDTTCPVCR) adopts an RING-type zinc-finger fold. A UBP-type; degenerate zinc finger spans residues 301–393 (PVCRYCQTPE…GKIVQYECEG (93 aa)). Residues Cys317, Cys320, Cys329, Cys332, Cys337, His344, His348, and His354 each contribute to the Zn(2+) site. The stretch at 429-537 (RIEKDTAEEI…EIQEQLRDVM (109 aa)) forms a coiled coil. The tract at residues 565–592 (AMASASSPASSGGSGKLPSRKGRSKRGK) is disordered. Residues 582–592 (PSRKGRSKRGK) are compositionally biased toward basic residues.

In terms of assembly, interacts with the nuclear localization signal of BRCA1 and with the N-terminal of KSR1. The C-terminal portion of BCRA1 interacts with DDB1. Expressed in breast epithelial cell lines.

It localises to the cytoplasm. The enzyme catalyses S-ubiquitinyl-[E2 ubiquitin-conjugating enzyme]-L-cysteine + [acceptor protein]-L-lysine = [E2 ubiquitin-conjugating enzyme]-L-cysteine + N(6)-ubiquitinyl-[acceptor protein]-L-lysine.. The protein operates within protein modification; protein ubiquitination. In terms of biological role, negatively regulates MAP kinase activation by limiting the formation of Raf/MEK complexes probably by inactivation of the KSR1 scaffold protein. Also acts as a Ras responsive E3 ubiquitin ligase that, on activation of Ras, is modified by auto-polyubiquitination resulting in the release of inhibition of Raf/MEK complex formation. May also act as a cytoplasmic retention protein with a role in regulating nuclear transport. In Homo sapiens (Human), this protein is BRCA1-associated protein.